A 495-amino-acid chain; its full sequence is Surface E' protein (495 aa).

A helical transmembrane segment spans residues 224-235; sequence GTLIGLVALIGV.

It is found in the cell membrane. The sequence is that of Surface E' protein (cbbE') from Coxiella burnetii.